We begin with the raw amino-acid sequence, 364 residues long: Coproporphyrin III ferrochelatase (364 aa).

Fe-coproporphyrin III-binding residues include Arg-29 and Tyr-118. His-169 and Glu-250 together coordinate Fe(2+).

The protein belongs to the ferrochelatase family.

Its subcellular location is the cytoplasm. It catalyses the reaction Fe-coproporphyrin III + 2 H(+) = coproporphyrin III + Fe(2+). It functions in the pathway porphyrin-containing compound metabolism; protoheme biosynthesis. Functionally, involved in coproporphyrin-dependent heme b biosynthesis. Catalyzes the insertion of ferrous iron into coproporphyrin III to form Fe-coproporphyrin III. This is Coproporphyrin III ferrochelatase from Streptococcus pneumoniae serotype 2 (strain D39 / NCTC 7466).